We begin with the raw amino-acid sequence, 429 residues long: Formate-dependent phosphoribosylglycinamide formyltransferase (429 aa).

N(1)-(5-phospho-beta-D-ribosyl)glycinamide contacts are provided by residues Glu26–Leu27 and Glu86. ATP-binding positions include Arg118, Lys159, Glu199–Ile202, and Glu207. One can recognise an ATP-grasp domain in the interval Glu123–Leu319. Residues Glu276 and Glu288 each coordinate Mg(2+). Residues Asp295, Lys375, and Arg382–Arg383 contribute to the N(1)-(5-phospho-beta-D-ribosyl)glycinamide site.

The protein belongs to the PurK/PurT family. In terms of assembly, homodimer.

It carries out the reaction N(1)-(5-phospho-beta-D-ribosyl)glycinamide + formate + ATP = N(2)-formyl-N(1)-(5-phospho-beta-D-ribosyl)glycinamide + ADP + phosphate + H(+). It functions in the pathway purine metabolism; IMP biosynthesis via de novo pathway; N(2)-formyl-N(1)-(5-phospho-D-ribosyl)glycinamide from N(1)-(5-phospho-D-ribosyl)glycinamide (formate route): step 1/1. Functionally, involved in the de novo purine biosynthesis. Catalyzes the transfer of formate to 5-phospho-ribosyl-glycinamide (GAR), producing 5-phospho-ribosyl-N-formylglycinamide (FGAR). Formate is provided by PurU via hydrolysis of 10-formyl-tetrahydrofolate. The polypeptide is Formate-dependent phosphoribosylglycinamide formyltransferase (Pyrococcus abyssi (strain GE5 / Orsay)).